We begin with the raw amino-acid sequence, 289 residues long: ATP synthase mitochondrial F1 complex assembly factor 2 (289 aa).

The transit peptide at 1–40 (MWRRCLRLRDVGRRLLNLPRSGLTASEGLGPKLPTPIRAY) directs the protein to the mitochondrion. Lysine 133 is subject to N6-succinyllysine.

This sequence belongs to the ATP12 family. As to quaternary structure, interacts with ATP5F1B; involved in the assembly of the F1 component of the mitochondrial ATP synthase (ATPase). Interacts with FMC1.

The protein localises to the mitochondrion inner membrane. Plays a role in the assembly of the F1 component of the mitochondrial ATP synthase (ATPase). The polypeptide is ATP synthase mitochondrial F1 complex assembly factor 2 (ATPAF2) (Bos taurus (Bovine)).